The primary structure comprises 406 residues: HEAT repeat-containing taxis protein OE_2401F (406 aa).

7 HEAT repeats span residues Leu7–Glu41, Pro42–Leu78, Gly90–Ala127, Ile153–Leu184, Thr185–Phe215, Glu216–Pro252, and Val370–Thr406.

Interacts with chemotaxis (Che) proteins.

In terms of biological role, involved in taxis signal transduction. Essential for the ability to control the direction of flagellar rotation. May have a role between CheY and the flagellum. This chain is HEAT repeat-containing taxis protein OE_2401F, found in Halobacterium salinarum (strain ATCC 29341 / DSM 671 / R1).